Here is a 305-residue protein sequence, read N- to C-terminus: Mas-related G-protein coupled receptor member A2B (305 aa).

Topologically, residues 1-17 are extracellular; sequence MDETLPGSINIRILIPK. A helical transmembrane segment spans residues 18 to 38; that stretch reads LMIIIFGLVGLMGNAIVFWLL. Residues 39–53 lie on the Cytoplasmic side of the membrane; it reads GFHLRRNAFSVYILN. A helical transmembrane segment spans residues 54–74; sequence LALADFLFLLSSIIASTLFLL. Over 75-78 the chain is Extracellular; that stretch reads KVSY. A helical transmembrane segment spans residues 79-99; it reads LSIIFHLCFNTIMMVVYITGI. The Cytoplasmic segment spans residues 100 to 132; it reads SMLSAISTECCLSVLCPTWYRCHRPVHTSTVMC. The helical transmembrane segment at 133 to 153 threads the bilayer; sequence AVIWVLSLLICILNSYFCAVL. At 154-167 the chain is on the extracellular side; that stretch reads HTRYDNDNECLATN. Residues 168 to 188 traverse the membrane as a helical segment; sequence IFTASYMIFLLVVLCLSSLAL. Over 189-207 the chain is Cytoplasmic; the sequence is LARLFCGAGQMKLTRFHVT. Residues 208–228 form a helical membrane-spanning segment; sequence ILLTLLVFLLCGLPFVIYCIL. Residues 229–244 lie on the Extracellular side of the membrane; it reads LFKIKDDFHVLDVNFY. Residues 245-265 form a helical membrane-spanning segment; the sequence is LALEVLTAINSCANPIIYFFV. Residues 266-305 lie on the Cytoplasmic side of the membrane; it reads GSFRHQLKHQTLKMVLQSALQDTPETAENMVEMSSNKAEP.

Belongs to the G-protein coupled receptor 1 family. Mas subfamily. Expressed in a subset of sensory neurons that includes nociceptors. Expressed in the subclass of non-peptidergic sensory neurons that are IB4(+) and VR1(-).

It is found in the cell membrane. Orphan receptor. May be a receptor for RFamide-family neuropeptides such as NPFF and NPAF, which are analgesic in vivo. May regulate nociceptor function and/or development, including the sensation or modulation of pain. In Mus musculus (Mouse), this protein is Mas-related G-protein coupled receptor member A2B.